The chain runs to 110 residues: UPF0060 membrane protein Bcen_0802 (110 aa).

The next 4 membrane-spanning stretches (helical) occupy residues Ala-9–Leu-29, Pro-34–Leu-54, Tyr-66–Leu-86, and Arg-88–Pro-108.

Belongs to the UPF0060 family.

Its subcellular location is the cell inner membrane. The chain is UPF0060 membrane protein Bcen_0802 from Burkholderia orbicola (strain AU 1054).